The chain runs to 1187 residues: DNA-directed RNA polymerase subunit beta (1187 aa).

It belongs to the RNA polymerase beta chain family. The RNAP catalytic core consists of 2 alpha, 1 beta, 1 beta' and 1 omega subunit. When a sigma factor is associated with the core the holoenzyme is formed, which can initiate transcription.

The enzyme catalyses RNA(n) + a ribonucleoside 5'-triphosphate = RNA(n+1) + diphosphate. In terms of biological role, DNA-dependent RNA polymerase catalyzes the transcription of DNA into RNA using the four ribonucleoside triphosphates as substrates. The chain is DNA-directed RNA polymerase subunit beta from Streptococcus mutans serotype c (strain ATCC 700610 / UA159).